Reading from the N-terminus, the 624-residue chain is DNA mismatch repair protein MutL (624 aa).

Positions Gly-360–Tyr-396 are disordered. Residues Pro-369 to Ala-385 show a composition bias toward basic and acidic residues.

This sequence belongs to the DNA mismatch repair MutL/HexB family.

Functionally, this protein is involved in the repair of mismatches in DNA. It is required for dam-dependent methyl-directed DNA mismatch repair. May act as a 'molecular matchmaker', a protein that promotes the formation of a stable complex between two or more DNA-binding proteins in an ATP-dependent manner without itself being part of a final effector complex. This chain is DNA mismatch repair protein MutL, found in Serratia proteamaculans (strain 568).